The sequence spans 645 residues: 1,4-alpha-glucan branching enzyme GlgB (645 aa).

Residue aspartate 309 is the Nucleophile of the active site. The Proton donor role is filled by glutamate 352. Positions 619–645 (VKTRKGSKKQDGSKTKVRSNVTSRGKR) are disordered. Over residues 636 to 645 (RSNVTSRGKR) the composition is skewed to polar residues.

It belongs to the glycosyl hydrolase 13 family. GlgB subfamily. In terms of assembly, monomer.

The catalysed reaction is Transfers a segment of a (1-&gt;4)-alpha-D-glucan chain to a primary hydroxy group in a similar glucan chain.. It functions in the pathway glycan biosynthesis; glycogen biosynthesis. Functionally, catalyzes the formation of the alpha-1,6-glucosidic linkages in glycogen by scission of a 1,4-alpha-linked oligosaccharide from growing alpha-1,4-glucan chains and the subsequent attachment of the oligosaccharide to the alpha-1,6 position. This chain is 1,4-alpha-glucan branching enzyme GlgB, found in Bacillus mycoides (strain KBAB4) (Bacillus weihenstephanensis).